The primary structure comprises 1228 residues: Serine/threonine-protein kinase CST20 (1228 aa).

The span at 1 to 18 shows a compositional bias: polar residues; it reads MSILSENNPTQTSITDPN. 2 disordered regions span residues 1–382 and 405–468; these read MSIL…TAHN and NSTN…HSQE. Low complexity-rich tracts occupy residues 57 to 70 and 95 to 123; these read NTTS…SLGS and ESGS…NPES. The span at 148–159 shows a compositional bias: basic and acidic residues; sequence HQGDDSDNEKQY. Polar residues-rich tracts occupy residues 173-195, 205-222, and 232-244; these read DSYS…NNVS, TSSL…NENA, and PQVS…SFHD. Residues 246 to 255 are compositionally biased toward low complexity; that stretch reads SSVISSSTSV. Polar residues-rich tracts occupy residues 260–275 and 309–328; these read SNPT…SYKS and DTLS…TLQG. Positions 347–367 are enriched in low complexity; sequence NTSATSRNTSGTSTSTVVKNS. The segment covering 368 to 382 has biased composition (polar residues); that stretch reads RSGTSKLTSTSTAHN. Residues 437-466 are compositionally biased toward low complexity; sequence KVRGVFSSMFGKNKSTSSSSSSNSGSNSHS. Residues 473–486 enclose the CRIB domain; that stretch reads ISTPFNAKHLAHVG. Disordered regions lie at residues 543–829 and 865–917; these read FHFD…ALAD and LREK…KQAA. Polar residues predominate over residues 548–559; sequence NKSSSSGWSNEN. Residues 568-579 are compositionally biased toward gly residues; it reads SNSGSGGGGGGA. Over residues 602–611 the composition is skewed to polar residues; the sequence is ITPSQSMPTK. Basic and acidic residues predominate over residues 612-626; that stretch reads TESKQSENQHPHEDN. Positions 627 to 640 are enriched in polar residues; it reads ATQYTPRTPTSHVQ. Low complexity-rich tracts occupy residues 668–681, 693–708, and 734–747; these read PSSQ…SQSD, ISPS…SKSL, and SIPK…SLSS. Residues 748–759 are compositionally biased toward polar residues; it reads QLRPATNGSTTA. Over residues 787 to 805 the composition is skewed to pro residues; sequence APPPPPSASPAPPVPPAPP. The segment covering 809–824 has biased composition (polar residues); the sequence is LSEQTSEIPQQRTAPS. Over residues 865 to 874 the composition is skewed to basic and acidic residues; sequence LREKNERQNR. Residues 875–890 show a composition bias toward polar residues; sequence QQETGQNNADTASGGS. Residues 951–1203 enclose the Protein kinase domain; the sequence is YVDLVKIGQG…ADELLHDNFI (253 aa). ATP-binding positions include 957–965 and Lys-981; that span reads IGQGASGGV. The active-site Proton acceptor is Asp-1071.

This sequence belongs to the protein kinase superfamily. STE Ser/Thr protein kinase family. STE20 subfamily.

It is found in the cytoplasm. It localises to the nucleus. The enzyme catalyses L-seryl-[protein] + ATP = O-phospho-L-seryl-[protein] + ADP + H(+). The catalysed reaction is L-threonyl-[protein] + ATP = O-phospho-L-threonyl-[protein] + ADP + H(+). Its function is as follows. MAP4K component of the MAPK pathway required for the mating pheromone response, and the regulation of cell polarity and cell cycle. Phosphorylates histone H2B to form H2BS10ph. Required for hyphal formation and virulence. This chain is Serine/threonine-protein kinase CST20 (CST20), found in Candida albicans (strain SC5314 / ATCC MYA-2876) (Yeast).